The chain runs to 240 residues: Methylthioribulose-1-phosphate dehydratase (240 aa).

Cys-99 is a binding site for substrate. Residues His-116 and His-118 each coordinate Zn(2+). Glu-145 acts as the Proton donor/acceptor in catalysis. His-201 is a binding site for Zn(2+).

This sequence belongs to the aldolase class II family. MtnB subfamily. Requires Zn(2+) as cofactor.

It is found in the cytoplasm. It catalyses the reaction 5-(methylsulfanyl)-D-ribulose 1-phosphate = 5-methylsulfanyl-2,3-dioxopentyl phosphate + H2O. It functions in the pathway amino-acid biosynthesis; L-methionine biosynthesis via salvage pathway; L-methionine from S-methyl-5-thio-alpha-D-ribose 1-phosphate: step 2/6. Functionally, catalyzes the dehydration of methylthioribulose-1-phosphate (MTRu-1-P) into 2,3-diketo-5-methylthiopentyl-1-phosphate (DK-MTP-1-P). In Ajellomyces capsulatus (strain H143) (Darling's disease fungus), this protein is Methylthioribulose-1-phosphate dehydratase.